The sequence spans 122 residues: uncharacterized protein (122 aa).

Residues 9–25 form a helical membrane-spanning segment; sequence AFPSPVFLGGVFFVFFF.

It localises to the cytoplasm. The protein localises to the nucleus. It is found in the membrane. This is an uncharacterized protein from Saccharomyces cerevisiae (strain ATCC 204508 / S288c) (Baker's yeast).